A 398-amino-acid polypeptide reads, in one-letter code: Neuroplastin (398 aa).

The signal sequence occupies residues 1–28 (MSGSSLPSALALSLLLVSGSLLPGPGAA). Ig-like domains lie at 29 to 134 (QNAG…PSIT), 148 to 235 (PRIV…IEVK), and 238 to 329 (PDIT…SVVT). Residues 29–339 (QNAGFVKSPM…VLRVRSHLAP (311 aa)) are Extracellular-facing. Cys-52 and Cys-116 are oxidised to a cystine. The narpin; mediates binding with FGFR1 and has antidepressant-like activity stretch occupies residues 149 to 161 (RIVTSEEVIIRDS). A disulfide bridge links Cys-170 with Cys-218. 6 N-linked (GlcNAc...) asparagine glycosylation sites follow: Asn-171, Asn-197, Asn-229, Asn-284, Asn-296, and Asn-317. Cysteines 259 and 316 form a disulfide. Residues 340–360 (LWPFLGILAEIIILVVIIVVY) traverse the membrane as a helical segment. Topologically, residues 361–398 (EKRKRPDEVPDDDEPAGPMKTNSTNNHKDKNLRQRNTN) are cytoplasmic. A disordered region spans residues 365–398 (RPDEVPDDDEPAGPMKTNSTNNHKDKNLRQRNTN).

Interacts with ATP2B1; this interaction stabilizes ATP2B1 and increases ATPase activity; this interaction controls T cell calcium homeostasis following T cell activation. Interacts with XKR8; promoting its localization at the cell membrane. As to expression, isoform 1 is ubiquitously expressed. Isoform 2 is expressed in brain cortex and cerebellum (at protein level).

It localises to the cell membrane. The protein localises to the postsynaptic density. Probable homophilic and heterophilic cell adhesion molecule involved in long term potentiation at hippocampal excitatory synapses through activation of p38MAPK. May also regulate neurite outgrowth by activating the FGFR1 signaling pathway. May play a role in synaptic plasticity. Also acts as a chaperone for ATP2B1; stabilizes ATP2B1 and increases its ATPase activity. Promotes localization of XKR8 at the cell membrane. The protein is Neuroplastin (NPTN) of Homo sapiens (Human).